Reading from the N-terminus, the 261-residue chain is Phosphate import ATP-binding protein PstB 4 (261 aa).

One can recognise an ABC transporter domain in the interval 8 to 256; the sequence is IKVNNLSFYY…PHDSRTREYV (249 aa). 40-47 contacts ATP; sequence GPSGCGKS.

The protein belongs to the ABC transporter superfamily. Phosphate importer (TC 3.A.1.7) family. The complex is composed of two ATP-binding proteins (PstB), two transmembrane proteins (PstC and PstA) and a solute-binding protein (PstS).

The protein localises to the cell inner membrane. It carries out the reaction phosphate(out) + ATP + H2O = ADP + 2 phosphate(in) + H(+). Part of the ABC transporter complex PstSACB involved in phosphate import. Responsible for energy coupling to the transport system. The polypeptide is Phosphate import ATP-binding protein PstB 4 (Trichormus variabilis (strain ATCC 29413 / PCC 7937) (Anabaena variabilis)).